Consider the following 116-residue polypeptide: Large ribosomal subunit protein uL22c (116 aa).

The protein belongs to the universal ribosomal protein uL22 family. In terms of assembly, part of the 50S ribosomal subunit.

The protein resides in the plastid. The protein localises to the chloroplast. This protein binds specifically to 23S rRNA. In terms of biological role, the globular domain of the protein is located near the polypeptide exit tunnel on the outside of the subunit, while an extended beta-hairpin is found that lines the wall of the exit tunnel in the center of the 70S ribosome. The sequence is that of Large ribosomal subunit protein uL22c (rpl22) from Porphyra purpurea (Red seaweed).